The primary structure comprises 375 residues: 4-hydroxy-3-methylbut-2-en-1-yl diphosphate synthase (flavodoxin) (375 aa).

Residues Cys-268, Cys-271, Cys-303, and Glu-310 each contribute to the [4Fe-4S] cluster site.

The protein belongs to the IspG family. The cofactor is [4Fe-4S] cluster.

It catalyses the reaction (2E)-4-hydroxy-3-methylbut-2-enyl diphosphate + oxidized [flavodoxin] + H2O + 2 H(+) = 2-C-methyl-D-erythritol 2,4-cyclic diphosphate + reduced [flavodoxin]. It functions in the pathway isoprenoid biosynthesis; isopentenyl diphosphate biosynthesis via DXP pathway; isopentenyl diphosphate from 1-deoxy-D-xylulose 5-phosphate: step 5/6. Converts 2C-methyl-D-erythritol 2,4-cyclodiphosphate (ME-2,4cPP) into 1-hydroxy-2-methyl-2-(E)-butenyl 4-diphosphate. The chain is 4-hydroxy-3-methylbut-2-en-1-yl diphosphate synthase (flavodoxin) from Bacillus velezensis (strain DSM 23117 / BGSC 10A6 / LMG 26770 / FZB42) (Bacillus amyloliquefaciens subsp. plantarum).